The chain runs to 400 residues: 11-beta-hydroxysteroid dehydrogenase type 2 (400 aa).

Residue 82-111 (TRAVLITGCDTGFGKETAKKLDAMGFTVLA) participates in NAD(+) binding. Position 219 (S219) interacts with substrate. Y232 functions as the Proton acceptor in the catalytic mechanism. A disordered region spans residues 378-400 (PGQPGPVHDTTQDPNPSPTVSAL). Polar residues predominate over residues 389–400 (QDPNPSPTVSAL).

Belongs to the short-chain dehydrogenases/reductases (SDR) family. In terms of assembly, interacts with ligand-free cytoplasmic NR3C2. Highly expressed in kidney, adrenal gland and distal colon, and at much lower levels in lung, hypothalamus, hippocampus, and midbrain.

It is found in the microsome. The protein resides in the endoplasmic reticulum. It catalyses the reaction an 11beta-hydroxysteroid + NAD(+) = an 11-oxosteroid + NADH + H(+). The enzyme catalyses corticosterone + NAD(+) = 11-dehydrocorticosterone + NADH + H(+). It carries out the reaction 11beta,17beta-dihydroxyandrost-4-ene-3-one + NAD(+) = 17beta-hydroxyandrost-4-ene-3,11-dione + NADH + H(+). The catalysed reaction is 11beta-hydroxyandrost-4-ene-3,17-dione + NAD(+) = androst-4-ene-3,11,17-trione + NADH + H(+). Its pathway is steroid metabolism. Inhibited by glycyrrhetinic acid. Induced by progesterone, through the Ihh signaling pathway. Its function is as follows. Catalyzes the conversion of biologically active 11beta-hydroxyglucocorticoids (11beta-hydroxysteroid) such as corticosterone, to inactive 11-ketoglucocorticoids (11-oxosteroid) such as 11-dehydrocorticosterone, in the presence of NAD(+). Functions as a dehydrogenase (oxidase), thereby decreasing the concentration of active glucocorticoids, thus protecting the nonselective mineralocorticoid receptor from occupation by glucocorticoids. Plays an important role in maintaining glucocorticoids balance during preimplantation and protects the fetus from excessive maternal corticosterone exposure. Catalyzes the oxidation of 11beta-hydroxytestosterone (11beta,17beta-dihydroxyandrost-4-ene-3-one) to 11-ketotestosterone (17beta-hydroxyandrost-4-ene-3,11-dione), a major bioactive androgen. Catalyzes the conversion of 11beta-hydroxyandrostenedione (11beta-hydroxyandrost-4-ene-3,17-dione) to 11-ketoandrostenedione (androst-4-ene-3,11,17-trione), which can be further metabolized to 11-ketotestosterone. Converts 7-beta-25-dihydroxycholesterol to 7-oxo-25-hydroxycholesterol in vitro. 7-beta-25-dihydroxycholesterol (not 7-oxo-25-hydroxycholesterol) acts as a ligand for the G-protein-coupled receptor (GPCR) Epstein-Barr virus-induced gene 2 (EBI2) and may thereby regulate immune cell migration. This chain is 11-beta-hydroxysteroid dehydrogenase type 2 (Hsd11b2), found in Rattus norvegicus (Rat).